Reading from the N-terminus, the 283-residue chain is MNSNRCQTNEVNKFISSTEKGPFTGRDNTLSFNKIGSRLNSPPILKDKIELKFLQHSEDLNQSRSYVNIRPRTLEDQSYKFEAPNLNDNETSWAKDFRYNFPKNVEPPIENQIANLNINNGLRTSQTDFPLGFYSQKNFNIASFPVVDHQIFKTTGLEHPINSHIDSLINAEFSELEASSLEEDVHTEEENSGTSLEDEETAMKGLASDIIEFCDNNSANKDVKERLNSSKFMGLMGSISDGSIVLKKDNGTERNLQKHVGFCFQNSGNWAGLEFHDVEDRIA.

The tract at residues 179–201 is disordered; the sequence is SSLEEDVHTEEENSGTSLEDEET. The segment covering 180 to 200 has biased composition (acidic residues); the sequence is SLEEDVHTEEENSGTSLEDEE.

As to quaternary structure, interacts with PEX7; The interaction with PEX7 stabilizes PEX18. Interacts with PEX13. Ubiquitinated in a UBC4/UBC5 dependent manner.

The protein localises to the cytoplasm. It localises to the peroxisome membrane. Functionally, involved in peroxisome biogenesis and the import of peroxisomal matrix proteins that contain the peroxisomal targeting sequence PTS2. Required for peroxisomal targeting of PEX7 and growth on oleate. The sequence is that of Peroxisomal membrane protein PEX18 (PEX18) from Saccharomyces cerevisiae (strain ATCC 204508 / S288c) (Baker's yeast).